The following is a 214-amino-acid chain: tRNA (guanine-N(7)-)-methyltransferase (214 aa).

S-adenosyl-L-methionine-binding residues include E45, D70, N97, and N119. Substrate is bound at residue K123. The tract at residues R125–R130 is interaction with RNA. Substrate is bound by residues D155 and T193–E196.

This sequence belongs to the class I-like SAM-binding methyltransferase superfamily. TrmB family.

It catalyses the reaction guanosine(46) in tRNA + S-adenosyl-L-methionine = N(7)-methylguanosine(46) in tRNA + S-adenosyl-L-homocysteine. The protein operates within tRNA modification; N(7)-methylguanine-tRNA biosynthesis. Functionally, catalyzes the formation of N(7)-methylguanine at position 46 (m7G46) in tRNA. This is tRNA (guanine-N(7)-)-methyltransferase from Clostridium novyi (strain NT).